The sequence spans 452 residues: Chromosomal replication initiator protein DnaA (452 aa).

A domain I, interacts with DnaA modulators region spans residues 1–73 (MSPNSTLWQT…NELATKYSST (73 aa)). The domain II stretch occupies residues 73–102 (TPVRLKFVSQEEVIEEPVADRKLTIDYRQG). The segment at 103–323 (NLNSTYTFDS…GALIRLISYA (221 aa)) is domain III, AAA+ region. Positions 147, 149, 150, and 151 each coordinate ATP. Residues 324–452 (QTFNLEITMN…VKKIDSPLLK (129 aa)) are domain IV, binds dsDNA.

Belongs to the DnaA family. Oligomerizes as a right-handed, spiral filament on DNA at oriC.

The protein resides in the cytoplasm. Its function is as follows. Plays an essential role in the initiation and regulation of chromosomal replication. ATP-DnaA binds to the origin of replication (oriC) to initiate formation of the DNA replication initiation complex once per cell cycle. Binds the DnaA box (a 9 base pair repeat at the origin) and separates the double-stranded (ds)DNA. Forms a right-handed helical filament on oriC DNA; dsDNA binds to the exterior of the filament while single-stranded (ss)DNA is stabiized in the filament's interior. The ATP-DnaA-oriC complex binds and stabilizes one strand of the AT-rich DNA unwinding element (DUE), permitting loading of DNA polymerase. After initiation quickly degrades to an ADP-DnaA complex that is not apt for DNA replication. Binds acidic phospholipids. This Acholeplasma laidlawii (strain PG-8A) protein is Chromosomal replication initiator protein DnaA.